The chain runs to 103 residues: MYAVFQSGGKQHRVSEGQVVRLEKLELATGATVEFDSVLMVVNGEDVKIGAPVVAGAKVVAEVIAQGRGEKVKIVKFRRRKHSRKQQGHRQWFTEVKITGIQA.

It belongs to the bacterial ribosomal protein bL21 family. As to quaternary structure, part of the 50S ribosomal subunit. Contacts protein L20.

This protein binds to 23S rRNA in the presence of protein L20. The chain is Large ribosomal subunit protein bL21 from Haemophilus influenzae (strain 86-028NP).